A 66-amino-acid chain; its full sequence is Large ribosomal subunit protein uL29 (66 aa).

It belongs to the universal ribosomal protein uL29 family.

The sequence is that of Large ribosomal subunit protein uL29 from Francisella tularensis subsp. tularensis (strain FSC 198).